We begin with the raw amino-acid sequence, 175 residues long: uncharacterized protein (175 aa).

Positions 10-157 constitute an HTH marR-type domain; it reads LFELYAELIH…AERLFRDLVT (148 aa). Positions 68-91 form a DNA-binding region, H-T-H motif; sequence VTSIAEKMNTTKATVSRISTKLLG.

Its subcellular location is the cytoplasm. This is an uncharacterized protein from Bacillus subtilis (strain 168).